A 323-amino-acid polypeptide reads, in one-letter code: Sphingolipid delta(4)-desaturase/C4-monooxygenase DES2 (323 aa).

The N-myristoyl glycine moiety is linked to residue G2. 2 helical membrane passes run 45 to 65 (WAVLVLVLVQMLACWLVRGLA) and 68 to 88 (WLLFWAYAFGGCVNHSLTLAI). The Histidine box-1 signature appears at 89 to 93 (HDISH). A required for C4-hydroxylase activity region spans residues 95-99 (AAFGT). The Histidine box-2 signature appears at 128-132 (HVDHH). The chain crosses the membrane as a helical span at residues 210–231 (VYLLASSFLGLGLHPISGHFVA). The Histidine box-3 signature appears at 259–263 (HVEHH).

This sequence belongs to the fatty acid desaturase type 1 family. DEGS subfamily. Highly expressed in skin, intestine and kidney.

The protein resides in the endoplasmic reticulum membrane. The catalysed reaction is a dihydroceramide + 2 Fe(II)-[cytochrome b5] + O2 + 2 H(+) = a phytoceramide + 2 Fe(III)-[cytochrome b5] + H2O. The enzyme catalyses an N-acylsphinganine + 2 Fe(II)-[cytochrome b5] + O2 + 2 H(+) = an N-acylsphing-4-enine + 2 Fe(III)-[cytochrome b5] + 2 H2O. It carries out the reaction N-octanoylsphinganine + 2 Fe(II)-[cytochrome b5] + O2 + 2 H(+) = N-octanoyl-4-hydroxysphinganine + 2 Fe(III)-[cytochrome b5] + H2O. It catalyses the reaction an N-acylsphinganine + 2 Fe(II)-[cytochrome b5] + O2 + 2 H(+) = an N-acyl-(4R)-4-hydroxysphinganine + 2 Fe(III)-[cytochrome b5] + H2O. It functions in the pathway membrane lipid metabolism; sphingolipid biosynthesis. Its function is as follows. Bifunctional enzyme which acts both as a sphingolipid delta(4)-desaturase and a sphingolipid C4-monooxygenase. The protein is Sphingolipid delta(4)-desaturase/C4-monooxygenase DES2 of Homo sapiens (Human).